The sequence spans 565 residues: Periplasmic trehalase (565 aa).

An N-terminal signal peptide occupies residues 1 to 30; sequence MKSPAPSRPQKMALIPACIFLCFAALSVQA. Substrate is bound by residues R152, 159–160, N196, 205–207, 277–279, and G310; these read WD, RSQ, and RPE. Active-site proton donor/acceptor residues include D312 and E496. E511 is a binding site for substrate. Positions 538–565 are disordered; it reads PCDNVPATRPTVKSATTQPSTKEAQPTP. The segment covering 548–565 has biased composition (polar residues); it reads TVKSATTQPSTKEAQPTP.

Belongs to the glycosyl hydrolase 37 family. In terms of assembly, monomer.

It localises to the periplasm. It carries out the reaction alpha,alpha-trehalose + H2O = alpha-D-glucose + beta-D-glucose. Provides the cells with the ability to utilize trehalose at high osmolarity by splitting it into glucose molecules that can subsequently be taken up by the phosphotransferase-mediated uptake system. The protein is Periplasmic trehalase of Escherichia coli O8 (strain IAI1).